We begin with the raw amino-acid sequence, 240 residues long: Ribosomal RNA large subunit methyltransferase E (240 aa).

Residues 1-13 (MAKKPGSQNTSGR) show a composition bias toward polar residues. The interval 1-20 (MAKKPGSQNTSGRGQRDLKV) is disordered. S-adenosyl-L-methionine is bound by residues glycine 85, tryptophan 87, aspartate 113, aspartate 129, and aspartate 153. The active-site Proton acceptor is the lysine 193.

Belongs to the class I-like SAM-binding methyltransferase superfamily. RNA methyltransferase RlmE family.

The protein resides in the cytoplasm. The enzyme catalyses uridine(2552) in 23S rRNA + S-adenosyl-L-methionine = 2'-O-methyluridine(2552) in 23S rRNA + S-adenosyl-L-homocysteine + H(+). Functionally, specifically methylates the uridine in position 2552 of 23S rRNA at the 2'-O position of the ribose in the fully assembled 50S ribosomal subunit. This is Ribosomal RNA large subunit methyltransferase E from Roseobacter denitrificans (strain ATCC 33942 / OCh 114) (Erythrobacter sp. (strain OCh 114)).